The sequence spans 166 residues: Transcription factor HES-5 (166 aa).

The 57-residue stretch at 16 to 72 (KNRLRKPVVEKMRRDRINSSIEQLKLLLEQEFARHQPNSKLEKADILEMAVSYLKHS) folds into the bHLH domain. In terms of domain architecture, Orange spans 88–119 (YSEGYSWCLQEAVQFLTLHAASDTQMKLLYHF). The interval 125-144 (APAAPAKEPKAPGAAPPPAL) is disordered. Positions 163-166 (WRPW) match the WRPW motif motif.

In terms of assembly, transcription repression requires formation of a complex with a corepressor protein of the Groucho/TLE family. Expressed in fetal heart and brain tumors.

Its subcellular location is the nucleus. Its function is as follows. Transcriptional repressor of genes that require a bHLH protein for their transcription. Plays an important role as neurogenesis negative regulator. The polypeptide is Transcription factor HES-5 (HES5) (Homo sapiens (Human)).